The sequence spans 284 residues: 2-dehydro-3-deoxyphosphooctonate aldolase (284 aa).

The protein belongs to the KdsA family.

It localises to the cytoplasm. It catalyses the reaction D-arabinose 5-phosphate + phosphoenolpyruvate + H2O = 3-deoxy-alpha-D-manno-2-octulosonate-8-phosphate + phosphate. It functions in the pathway carbohydrate biosynthesis; 3-deoxy-D-manno-octulosonate biosynthesis; 3-deoxy-D-manno-octulosonate from D-ribulose 5-phosphate: step 2/3. The protein operates within bacterial outer membrane biogenesis; lipopolysaccharide biosynthesis. The protein is 2-dehydro-3-deoxyphosphooctonate aldolase of Salmonella arizonae (strain ATCC BAA-731 / CDC346-86 / RSK2980).